The sequence spans 398 residues: CCA-adding enzyme (398 aa).

Residues Gly32 and Arg35 each contribute to the ATP site. Residues Gly32 and Arg35 each contribute to the CTP site. 2 residues coordinate Mg(2+): Asp45 and Asp47. Residues Arg119, Asp162, Arg165, Arg168, and Arg171 each coordinate ATP. Residues Arg119, Asp162, Arg165, Arg168, and Arg171 each contribute to the CTP site.

This sequence belongs to the tRNA nucleotidyltransferase/poly(A) polymerase family. Bacterial CCA-adding enzyme type 3 subfamily. Homodimer. Mg(2+) serves as cofactor.

The catalysed reaction is a tRNA precursor + 2 CTP + ATP = a tRNA with a 3' CCA end + 3 diphosphate. It catalyses the reaction a tRNA with a 3' CCA end + 2 CTP + ATP = a tRNA with a 3' CCACCA end + 3 diphosphate. Catalyzes the addition and repair of the essential 3'-terminal CCA sequence in tRNAs without using a nucleic acid template. Adds these three nucleotides in the order of C, C, and A to the tRNA nucleotide-73, using CTP and ATP as substrates and producing inorganic pyrophosphate. tRNA 3'-terminal CCA addition is required both for tRNA processing and repair. Also involved in tRNA surveillance by mediating tandem CCA addition to generate a CCACCA at the 3' terminus of unstable tRNAs. While stable tRNAs receive only 3'-terminal CCA, unstable tRNAs are marked with CCACCA and rapidly degraded. In Lactococcus lactis subsp. lactis (strain IL1403) (Streptococcus lactis), this protein is CCA-adding enzyme.